Reading from the N-terminus, the 151-residue chain is Macrodomain Ter protein (151 aa).

Belongs to the MatP family. As to quaternary structure, homodimer.

The protein resides in the cytoplasm. Its function is as follows. Required for spatial organization of the terminus region of the chromosome (Ter macrodomain) during the cell cycle. Prevents early segregation of duplicated Ter macrodomains during cell division. Binds specifically to matS, which is a 13 bp signature motif repeated within the Ter macrodomain. The protein is Macrodomain Ter protein of Photorhabdus laumondii subsp. laumondii (strain DSM 15139 / CIP 105565 / TT01) (Photorhabdus luminescens subsp. laumondii).